A 247-amino-acid chain; its full sequence is 5-oxoprolinase subunit A (247 aa).

Belongs to the LamB/PxpA family. As to quaternary structure, forms a complex composed of PxpA, PxpB and PxpC.

The enzyme catalyses 5-oxo-L-proline + ATP + 2 H2O = L-glutamate + ADP + phosphate + H(+). Catalyzes the cleavage of 5-oxoproline to form L-glutamate coupled to the hydrolysis of ATP to ADP and inorganic phosphate. This Klebsiella pneumoniae subsp. pneumoniae (strain ATCC 700721 / MGH 78578) protein is 5-oxoprolinase subunit A.